Consider the following 238-residue polypeptide: MPEDLAKQLASYKAQLQQVEAALSGNGENEDLLKLKKDLQEVIELTKDLLSTQPSETLASSDNFASTQPTHSWKVGDKCMAIWSEDGQCYEAEIEEIDEENGTAAITFAGYGNAEVTPLLNLKPVEEGRKAKEDSGNKPMSKKEMIAQQREYKKKKALKKAQRIKELEQEREDQKVKWQQFNNRAYSKNKKGQVKRSIFASPESVTGKVGVGTCGIADKPMTQYQDTSKYNVRHLMPQ.

The Tudor domain maps to 72–132; it reads SWKVGDKCMA…KPVEEGRKAK (61 aa). Positions 142 to 160 match the Nuclear localization signal motif; that stretch reads KKEMIAQQREYKKKKALKK. Position 201 is a phosphoserine (Ser201). Lys219 carries the N6-acetyllysine modification.

Belongs to the SMN family. Associates with spliceosomes. Associates with U4/U5/U6 tri-snRNP and with U2 snRNP.

Its subcellular location is the nucleus speckle. It is found in the nucleus. The protein localises to the cajal body. Functionally, involved in spliceosome assembly. The chain is Survival of motor neuron-related-splicing factor 30 (SMNDC1) from Bos taurus (Bovine).